The primary structure comprises 421 residues: Solute carrier family 35 member F3 (421 aa).

A disordered region spans residues 25-53 (EGEERPREPPGPAEAQAPAGTEAGGRTSR). Residues 37-49 (AEAQAPAGTEAGG) show a composition bias toward low complexity. Transmembrane regions (helical) follow at residues 66–86 (VFWGVAVVFCVCASWAGSTQL), 98–118 (FTLTWFATNWNFLFFPLYYAG), 149–169 (VFFTKAAPFGVLWTLTNYLYL), 179–199 (DVSVLFCCNKSFVFLLSWIVL), 208–228 (IVAAILAIAGIVMMTYADGFH), 232–252 (VIGIALVVGSASMSALYKVLF), 266–286 (LFLSILGVFNILFITCIPVIL), 305–325 (LCGFSILLLTFNIVLNFGIAV), 326–346 (TYPTLMSLGIVLSVPVNAVVD), and 352–372 (IVFNGVRVIAIIIIGLGFLLL). Positions 394–421 (KEETAESSGDLGTGPQSRSRRARPSFAR) are disordered. The segment covering 411–421 (RSRRARPSFAR) has biased composition (basic residues).

The protein belongs to the SLC35F solute transporter family.

It localises to the membrane. The enzyme catalyses thiamine(in) = thiamine(out). Functionally, mediates thiamine transport. The polypeptide is Solute carrier family 35 member F3 (Slc35f3) (Mus musculus (Mouse)).